The following is a 443-amino-acid chain: Thymidine phosphorylase (443 aa).

Belongs to the thymidine/pyrimidine-nucleoside phosphorylase family. In terms of assembly, homodimer.

The catalysed reaction is thymidine + phosphate = 2-deoxy-alpha-D-ribose 1-phosphate + thymine. It participates in pyrimidine metabolism; dTMP biosynthesis via salvage pathway; dTMP from thymine: step 1/2. Its function is as follows. The enzymes which catalyze the reversible phosphorolysis of pyrimidine nucleosides are involved in the degradation of these compounds and in their utilization as carbon and energy sources, or in the rescue of pyrimidine bases for nucleotide synthesis. The polypeptide is Thymidine phosphorylase (Shewanella frigidimarina (strain NCIMB 400)).